A 396-amino-acid polypeptide reads, in one-letter code: Elongation factor Tu (396 aa).

Residues 10–206 (KPHVNVGTIG…ALDTYIPTPE (197 aa)) enclose the tr-type G domain. The interval 19–26 (GHVDHGKT) is G1. Residue 19 to 26 (GHVDHGKT) participates in GTP binding. Thr-26 lines the Mg(2+) pocket. Positions 60–64 (GITIN) are G2. The interval 81 to 84 (DCPG) is G3. GTP-binding positions include 81–85 (DCPGH) and 136–139 (NKCD). Positions 136–139 (NKCD) are G4. The interval 174–176 (SAK) is G5.

This sequence belongs to the TRAFAC class translation factor GTPase superfamily. Classic translation factor GTPase family. EF-Tu/EF-1A subfamily. Monomer.

Its subcellular location is the cytoplasm. The enzyme catalyses GTP + H2O = GDP + phosphate + H(+). GTP hydrolase that promotes the GTP-dependent binding of aminoacyl-tRNA to the A-site of ribosomes during protein biosynthesis. The protein is Elongation factor Tu of Burkholderia vietnamiensis (strain G4 / LMG 22486) (Burkholderia cepacia (strain R1808)).